Here is a 163-residue protein sequence, read N- to C-terminus: UPF0262 protein RPA4530 (163 aa).

The protein belongs to the UPF0262 family.

The polypeptide is UPF0262 protein RPA4530 (Rhodopseudomonas palustris (strain ATCC BAA-98 / CGA009)).